The following is a 951-amino-acid chain: Leucine-rich repeat-containing G-protein coupled receptor 4 (951 aa).

A signal peptide spans 1–24; it reads MPGPLGLLCFLALGLLGSAGPSGA. The 33-residue stretch at 25–57 folds into the LRRNT domain; it reads APPLCAAPCSCDGDRRVDCSGKGLTAVPEGLSA. Over 25–544 the chain is Extracellular; the sequence is APPLCAAPCS…LLGSWMIRLT (520 aa). Intrachain disulfides connect C29–C35 and C33–C43. 10 LRR repeats span residues 58 to 79, 82 to 103, 106 to 127, 130 to 151, 154 to 177, 178 to 199, 202 to 223, 226 to 247, 249 to 270, and 273 to 294; these read FTQA…AFKN, FLEE…ALSG, ELKV…AIRG, ALQS…SFEG, QLRH…SNLP, TLQA…AFTN, SLVV…CFDG, NLET…IKAL, SLKE…AFDG, and LLRT…AFHN. N-linked (GlcNAc...) asparagine glycosylation occurs at N68. N199 carries N-linked (GlcNAc...) asparagine glycosylation. N294 and N314 each carry an N-linked (GlcNAc...) asparagine glycan. LRR repeat units lie at residues 320–341, 344–365, 366–387, 390–411, and 414–435; these read HLES…LCQE, MLRT…NGCH, ALEE…TFQG, SLRI…AFAT, and PITN…GLNG. A disulfide bridge links C339 with C364. 2 disulfide bridges follow: C470-C522 and C471-C476. N-linked (GlcNAc...) asparagine glycosylation is present at N505. The helical transmembrane segment at 545–565 threads the bilayer; it reads VWFIFLVALFFNLLVILTTFA. The Cytoplasmic portion of the chain corresponds to 566–575; sequence SCTSLPSSKL. A helical membrane pass occupies residues 576–596; the sequence is FIGLISVSNLFMGIYTGILTF. At 597-620 the chain is on the extracellular side; sequence LDAVSWGRFAEFGIWWETGSGCKV. An intrachain disulfide couples C618 to C693. Residues 621–641 traverse the membrane as a helical segment; sequence AGFLAVFSSESAIFLLMLATV. The Cytoplasmic portion of the chain corresponds to 642-661; sequence ERSLSAKDIMKNGKSNHLKQ. The chain crosses the membrane as a helical span at residues 662–682; it reads FRVAALLAFLGATVAGCFPLF. The Extracellular segment spans residues 683–703; that stretch reads HRGEYSASPLCLPFPTGETPS. Residues 704 to 724 form a helical membrane-spanning segment; it reads LGFTVTLVLLNSLAFLLMAVI. The Cytoplasmic portion of the chain corresponds to 725 to 756; it reads YTKLYCNLEKEDLSENSQSSMIKHVAWLIFTN. The chain crosses the membrane as a helical span at residues 757–777; it reads CIFFCPVAFFSFAPLITAISI. Topologically, residues 778–783 are extracellular; it reads SPEIMK. The chain crosses the membrane as a helical span at residues 784 to 804; sequence SVTLIFFPLPACLNPVLYVFF. The Cytoplasmic portion of the chain corresponds to 805 to 951; the sequence is NPKFKEDWKL…YAYNLPRVKD (147 aa). Position 920 is a phosphoserine (S920).

The protein belongs to the G-protein coupled receptor 1 family. Expressed in multiple steroidogenic tissues: placenta, ovary, testis and adrenal. Expressed also in spinal cord, thyroid, stomach, trachea, heart, pancreas, kidney, prostate and spleen.

The protein localises to the cell membrane. Functionally, receptor for R-spondins that potentiates the canonical Wnt signaling pathway and is involved in the formation of various organs. Upon binding to R-spondins (RSPO1, RSPO2, RSPO3 or RSPO4), associates with phosphorylated LRP6 and frizzled receptors that are activated by extracellular Wnt receptors, triggering the canonical Wnt signaling pathway to increase expression of target genes. In contrast to classical G-protein coupled receptors, does not activate heterotrimeric G-proteins to transduce the signal. Its function as activator of the Wnt signaling pathway is required for the development of various organs, including liver, kidney, intestine, bone, reproductive tract and eye. May also act as a receptor for norrin (NDP), such results however require additional confirmation in vivo. Required during spermatogenesis to activate the Wnt signaling pathway in peritubular myoid cells. Required for the maintenance of intestinal stem cells and Paneth cell differentiation in postnatal intestinal crypts. Acts as a regulator of bone formation and remodeling. Involved in kidney development; required for maintaining the ureteric bud in an undifferentiated state. Involved in the development of the anterior segment of the eye. Required during erythropoiesis. Also acts as a negative regulator of innate immunity by inhibiting TLR2/TLR4 associated pattern-recognition and pro-inflammatory cytokine production. Plays an important role in regulating the circadian rhythms of plasma lipids, partially through regulating the rhythmic expression of MTTP. Required for proper development of GnRH neurons (gonadotropin-releasing hormone expressing neurons) that control the release of reproductive hormones from the pituitary gland. The polypeptide is Leucine-rich repeat-containing G-protein coupled receptor 4 (LGR4) (Homo sapiens (Human)).